A 101-amino-acid polypeptide reads, in one-letter code: Large ribosomal subunit protein eL43 (101 aa).

Positions 40, 43, 59, and 62 each coordinate Zn(2+). The segment at 40-62 (CPSCRSLVRLERIAFGIWRCPKC) adopts a C4-type zinc-finger fold.

Belongs to the eukaryotic ribosomal protein eL43 family. Putative zinc-binding subfamily. As to quaternary structure, part of the 50S ribosomal subunit. The cofactor is Zn(2+).

Binds to the 23S rRNA. This is Large ribosomal subunit protein eL43 from Pyrobaculum aerophilum (strain ATCC 51768 / DSM 7523 / JCM 9630 / CIP 104966 / NBRC 100827 / IM2).